A 120-amino-acid chain; its full sequence is 5-hydroxyisourate hydrolase 2 (120 aa).

Residues His10, Arg48, and Tyr117 each contribute to the substrate site.

The protein belongs to the transthyretin family. 5-hydroxyisourate hydrolase subfamily. Homotetramer.

The catalysed reaction is 5-hydroxyisourate + H2O = 5-hydroxy-2-oxo-4-ureido-2,5-dihydro-1H-imidazole-5-carboxylate + H(+). Catalyzes the hydrolysis of 5-hydroxyisourate (HIU) to 2-oxo-4-hydroxy-4-carboxy-5-ureidoimidazoline (OHCU). The chain is 5-hydroxyisourate hydrolase 2 from Rhizobium meliloti (strain 1021) (Ensifer meliloti).